A 1022-amino-acid polypeptide reads, in one-letter code: Sodium/potassium-transporting ATPase subunit alpha (1022 aa).

The propeptide occupies 1 to 5 (MGKGA). The interval 1 to 34 (MGKGAASEKYQPAATSENAKNSKKSKSKTTDLDE) is disordered. Topologically, residues 6 to 87 (ASEKYQPAAT…NALTPPPTTP (82 aa)) are cytoplasmic. Phosphoserine; by PKC is present on Ser16. Residues 82–84 (PPP) are interaction with phosphoinositide-3 kinase. Residues 88–108 (EWIKFCRQLFGGFSILLWTGA) form a helical membrane-spanning segment. Residues 109–131 (ILCFLAYGIQVATVDNPANDNLY) are Lumenal-facing. Residues 132–152 (LGVVLSTVVIITGCFSYYQEA) form a helical membrane-spanning segment. The Cytoplasmic portion of the chain corresponds to 153 to 288 (KSSKIMDSFK…VGQTPIAAEI (136 aa)). Residues 215 to 235 (NSSLTGESEPQSRSPEYSSEN) form a disordered region. A helical membrane pass occupies residues 289 to 308 (EHFIHIITGVAVFLGVSFFI). Residues 309–320 (LSLILGYTWLEA) are Lumenal-facing. The helical transmembrane segment at 321-338 (VIFLIGIIVANVPEGLLA) threads the bilayer. The Cytoplasmic portion of the chain corresponds to 339-771 (TVTVCLTLTA…EEGRLIFDNL (433 aa)). Catalysis depends on Asp376, which acts as the 4-aspartylphosphate intermediate. Asp716 and Asp720 together coordinate Mg(2+). Residues 772–791 (KKSIAYTLTSNIPEITPFLV) form a helical membrane-spanning segment. Residues 792–801 (FIIANVPLPL) are Lumenal-facing. Residues 802–822 (GTVTILCIDLGTDMVPAISLA) traverse the membrane as a helical segment. Over 823 to 842 (YERAESDIMKRQPRNPKTDK) the chain is Cytoplasmic. Residues 843-865 (LVNERLISMAYGQIGMIQALGGF) form a helical membrane-spanning segment. Residues 866 to 917 (FSYFVILAENGFLPIDLIGIREKWDELWTQDLEDSYGQQWTYEQRKIVEYTC) are Lumenal-facing. The helical transmembrane segment at 918 to 937 (HTSFFVSIVIVQWADLIICK) threads the bilayer. Residues 938 to 950 (TRRNSIFQQGMKN) are Cytoplasmic-facing. Residue Ser942 is modified to Phosphoserine; by PKA. Residues 951-969 (KILIFGLFEETALAAFLSY) traverse the membrane as a helical segment. Topologically, residues 970 to 984 (TPGTDIALRMYPLKP) are lumenal. The chain crosses the membrane as a helical span at residues 985–1005 (SWWFCAFPYSLIIFLYDEARR). Over 1006-1022 (FILRRNPGGWVEQETYY) the chain is Cytoplasmic.

The protein belongs to the cation transport ATPase (P-type) (TC 3.A.3) family. Type IIC subfamily. In terms of assembly, the sodium/potassium-transporting ATPase is composed of a catalytic alpha subunit, an auxiliary non-catalytic beta subunit and an additional regulatory subunit.

The protein localises to the cell membrane. The enzyme catalyses K(+)(out) + Na(+)(in) + ATP + H2O = K(+)(in) + Na(+)(out) + ADP + phosphate + H(+). In terms of biological role, this is the catalytic component of the active enzyme, which catalyzes the hydrolysis of ATP coupled with the exchange of sodium and potassium ions across the plasma membrane. This action creates the electrochemical gradient of sodium and potassium ions, providing the energy for active transport of various nutrients. This is Sodium/potassium-transporting ATPase subunit alpha from Tetronarce californica (Pacific electric ray).